Here is a 360-residue protein sequence, read N- to C-terminus: Peptide chain release factor 1 (360 aa).

Glutamine 234 bears the N5-methylglutamine mark.

The protein belongs to the prokaryotic/mitochondrial release factor family. In terms of processing, methylated by PrmC. Methylation increases the termination efficiency of RF1.

It localises to the cytoplasm. In terms of biological role, peptide chain release factor 1 directs the termination of translation in response to the peptide chain termination codons UAG and UAA. This Clostridium perfringens (strain 13 / Type A) protein is Peptide chain release factor 1.